We begin with the raw amino-acid sequence, 1096 residues long: Phospholipase D zeta 1 (1096 aa).

Residue A2 is modified to N-acetylalanine. A PX domain is found at 50 to 204; it reads PKAVIVSVSR…REVCRFLEVS (155 aa). The segment at 131-152 is disordered; sequence VQDEDADEVPLHQDESAKNRDV. Positions 139–151 are enriched in basic and acidic residues; it reads VPLHQDESAKNRD. The region spanning 234-342 is the PH domain; that stretch reads DDSNRCCGCC…WVASINDAAL (109 aa). The PLD phosphodiesterase 1 domain occupies 477–504; it reads YLWSHHEKLVIVDNQVCFIGGLDLCFGR. Active-site residues include H482, K484, and D489. Residues 607 to 632 show a composition bias toward basic and acidic residues; that stretch reads GRQEESDIESKKEEDSIRGIRRDDSF. Residues 607-691 form a disordered region; the sequence is GRQEESDIES…DGDTPMRGFV (85 aa). The region spanning 892–919 is the PLD phosphodiesterase 2 domain; it reads SQVYVHSKIMIVDDRAALIGSANINDRS. Active-site residues include H897, K899, and D904.

It belongs to the phospholipase D family. PXPH-PLD subfamily. Does not require Ca(2+) or any other cation for activity. serves as cofactor. As to expression, expressed in inflorescences, flowers, siliques, stems, leaves, and roots. Highest expression in roots.

It is found in the cytoplasmic vesicle. It catalyses the reaction a 1,2-diacyl-sn-glycero-3-phosphocholine + H2O = a 1,2-diacyl-sn-glycero-3-phosphate + choline + H(+). Its activity is regulated as follows. Calcium-independent and PIP2-dependent. Its function is as follows. Hydrolyzes glycerol-phospholipids at the terminal phosphodiesteric bond to generate phosphatidic acids (PA). Phosphatidylcholine-selective. Regulates root-hair morphogenesis. Contributes to the supply of inorganic phosphorus for cell metabolism and diacylglycerol moieties for galactolipid synthesis in phosphorus-starved roots. Involved in root elongation during phosphate limitation. The polypeptide is Phospholipase D zeta 1 (Arabidopsis thaliana (Mouse-ear cress)).